Here is a 112-residue protein sequence, read N- to C-terminus: Ribosome-binding factor A (112 aa).

This sequence belongs to the RbfA family. As to quaternary structure, monomer. Binds 30S ribosomal subunits, but not 50S ribosomal subunits or 70S ribosomes.

The protein resides in the cytoplasm. Its function is as follows. One of several proteins that assist in the late maturation steps of the functional core of the 30S ribosomal subunit. Associates with free 30S ribosomal subunits (but not with 30S subunits that are part of 70S ribosomes or polysomes). Required for efficient processing of 16S rRNA. May interact with the 5'-terminal helix region of 16S rRNA. This chain is Ribosome-binding factor A, found in Mycoplasma genitalium (strain ATCC 33530 / DSM 19775 / NCTC 10195 / G37) (Mycoplasmoides genitalium).